The sequence spans 426 residues: DNA polymerase processivity factor component A20 (426 aa).

Belongs to the poxviruses A20 family. As to quaternary structure, interacts with the DNA polymerase catalytic subunit E9. Interacts with UDG. Component of the Uracil-DNA glycosylase(UDG)-A20-polymerase complex; A20 and UDG form a heterodimeric processivity factor that associates with E9 to form the processive polymerase holoenzyme. Interacts with D5.

Functionally, plays an essential role in viral DNA replication by acting as the polymerase processivity factor together with protein D4. May serve as a bridge which links the DNA polymerase E9 and the uracil DNA glycosylase. This chain is DNA polymerase processivity factor component A20, found in Vaccinia virus (strain Ankara) (VACV).